The sequence spans 737 residues: Angiotensin-converting enzyme-like protein Ace3 (737 aa).

A signal peptide spans 1–23 (MNLPWALLLVLLSHRQLLPWLRT). Topologically, residues 24–639 (VGETSLNDFY…TDTEPEQAYL (616 aa)) are extracellular. The 580-residue stretch at 32-611 (FYSEAQAKLF…VKQGDTLGWP (580 aa)) folds into the Peptidase M2 domain. A disulfide bridge connects residues Cys-146 and Cys-152. 2 residues coordinate chloride: Arg-180 and Tyr-218. The cysteines at positions 346 and 364 are disulfide-linked. Zn(2+) is bound by residues His-377 and His-381. Asn-390 carries N-linked (GlcNAc...) asparagine glycosylation. Glu-405 contacts Zn(2+). Chloride contacts are provided by Trp-479, Arg-483, and Arg-516. A disulfide bridge connects residues Cys-532 and Cys-544. A helical transmembrane segment spans residues 640–660 (GQWVLLSMSFFMLVLILALGF). Residues 661 to 700 (RLHYLEKQLLDEDTMILKTLPYSYFLGIAMEPHQAARKQW) are Cytoplasmic-facing. Residues 701–721 (LLLGLCCILMLCCIGLLIRIV) traverse the membrane as a helical segment. Residues 722–737 (TQNTENTPWMKNEGQS) are Extracellular-facing.

The protein belongs to the peptidase M2 family. As to quaternary structure, interacts with IZUMO1. Requires Zn(2+) as cofactor. As to expression, expressed in sperm and testis (at protein level). Expressed in heart and testis. Not detected in kidney, lung, liver, brain, ovary, spleen and thymus.

It localises to the cytoplasmic vesicle. The protein localises to the secretory vesicle. Its subcellular location is the acrosome membrane. This Mus musculus (Mouse) protein is Angiotensin-converting enzyme-like protein Ace3.